We begin with the raw amino-acid sequence, 223 residues long: GTP cyclohydrolase 1 (223 aa).

3 residues coordinate Zn(2+): C111, H114, and C182.

Belongs to the GTP cyclohydrolase I family. As to quaternary structure, homomer.

The catalysed reaction is GTP + H2O = 7,8-dihydroneopterin 3'-triphosphate + formate + H(+). Its pathway is cofactor biosynthesis; 7,8-dihydroneopterin triphosphate biosynthesis; 7,8-dihydroneopterin triphosphate from GTP: step 1/1. This is GTP cyclohydrolase 1 from Flavobacterium johnsoniae (strain ATCC 17061 / DSM 2064 / JCM 8514 / BCRC 14874 / CCUG 350202 / NBRC 14942 / NCIMB 11054 / UW101) (Cytophaga johnsonae).